The following is a 119-amino-acid chain: Beta-2-microglobulin (119 aa).

Residues 1–20 (MARFVVVALLVLLSLSGLEA) form the signal peptide. Positions 25 to 114 (PKIQVYSRHP…VTLSTPKTVK (90 aa)) constitute an Ig-like C1-type domain. The cysteines at positions 45 and 100 are disulfide-linked.

The protein belongs to the beta-2-microglobulin family. Heterodimer of an alpha chain and a beta chain. Beta-2-microglobulin is the beta-chain of major histocompatibility complex class I molecules.

Its subcellular location is the secreted. Component of the class I major histocompatibility complex (MHC). Involved in the presentation of peptide antigens to the immune system. This Aotus lemurinus (Gray-bellied night monkey) protein is Beta-2-microglobulin (B2M).